The sequence spans 370 residues: Neutral protease 2 homolog AFUA_4G13750 (370 aa).

Positions 1 to 19 (MKVTILASAILALINGALA) are cleaved as a signal peptide. The propeptide occupies 20–172 (LPANTPTLDV…PQAIKLLDRR (153 aa)). Cystine bridges form between Cys-178-Cys-250 and Cys-257-Cys-275. His-300 serves as a coordination point for Zn(2+). Glu-301 is an active-site residue. Residues His-304 and Asp-315 each coordinate Zn(2+).

It belongs to the peptidase M35 family. It depends on Zn(2+) as a cofactor.

It is found in the secreted. It carries out the reaction Preferential cleavage of bonds with hydrophobic residues in P1'. Also 3-Asn-|-Gln-4 and 8-Gly-|-Ser-9 bonds in insulin B chain.. Secreted metalloproteinase that allows assimilation of proteinaceous substrates. Shows high activities on basic nuclear substrates such as histone and protamine. May be involved in virulence. This is Neutral protease 2 homolog AFUA_4G13750 from Aspergillus fumigatus (strain ATCC MYA-4609 / CBS 101355 / FGSC A1100 / Af293) (Neosartorya fumigata).